Here is a 729-residue protein sequence, read N- to C-terminus: Fatty acid oxidation complex subunit alpha (729 aa).

The interval methionine 1–lysine 189 is enoyl-CoA hydratase/isomerase. Aspartate 296 is a substrate binding site. A 3-hydroxyacyl-CoA dehydrogenase region spans residues glutamate 311–alanine 729. NAD(+)-binding positions include methionine 324, aspartate 343, valine 400–glutamate 402, lysine 407, and serine 429. The active-site For 3-hydroxyacyl-CoA dehydrogenase activity is the histidine 450. Asparagine 453 serves as a coordination point for NAD(+). Asparagine 500 and tyrosine 660 together coordinate substrate. Residues arginine 708–alanine 729 are disordered.

This sequence in the N-terminal section; belongs to the enoyl-CoA hydratase/isomerase family. In the C-terminal section; belongs to the 3-hydroxyacyl-CoA dehydrogenase family. In terms of assembly, heterotetramer of two alpha chains (FadB) and two beta chains (FadA).

It carries out the reaction a (3S)-3-hydroxyacyl-CoA + NAD(+) = a 3-oxoacyl-CoA + NADH + H(+). It catalyses the reaction a (3S)-3-hydroxyacyl-CoA = a (2E)-enoyl-CoA + H2O. The catalysed reaction is a 4-saturated-(3S)-3-hydroxyacyl-CoA = a (3E)-enoyl-CoA + H2O. The enzyme catalyses (3S)-3-hydroxybutanoyl-CoA = (3R)-3-hydroxybutanoyl-CoA. It carries out the reaction a (3Z)-enoyl-CoA = a 4-saturated (2E)-enoyl-CoA. It catalyses the reaction a (3E)-enoyl-CoA = a 4-saturated (2E)-enoyl-CoA. It participates in lipid metabolism; fatty acid beta-oxidation. Its function is as follows. Involved in the aerobic and anaerobic degradation of long-chain fatty acids via beta-oxidation cycle. Catalyzes the formation of 3-oxoacyl-CoA from enoyl-CoA via L-3-hydroxyacyl-CoA. It can also use D-3-hydroxyacyl-CoA and cis-3-enoyl-CoA as substrate. The chain is Fatty acid oxidation complex subunit alpha from Salmonella enteritidis PT4 (strain P125109).